The sequence spans 1418 residues: Alpha-latrotoxin-Lhe1a (1418 aa).

An N-terminal signal peptide occupies residues 1 to 20 (MIFVGETMERANHSLVRLRR). Residues 17–20 (RLRR) are furin-like endopeptidase recognition region. Positions 238 to 257 (VLYALLYGTQTYISVMFFLL) are helix H8 is the probable transmembrane region of the tetrameric pore inserted in the target cell membrane. Cys-413 and Cys-1066 are disulfide-bonded. ANK repeat units lie at residues 458-489 (LYNA…ATFD), 490-521 (QGRT…ELNQ), 525-554 (KGYT…SINS), 559-589 (FLQT…NINE), 593-622 (DGFT…DVNA), 626-656 (KGLT…DINA), 660-690 (NNMT…NANV), 695-723 (GLLS…NVNV), 729-758 (GGIT…NIEQ), 762-791 (EKYT…NFEA), 795-824 (SGAT…NWRD), 828-857 (NGQM…TVLD), 862-891 (NSDT…DINT), 895-924 (NGHA…NVYI), 928-957 (NGMN…KFEW), 971-1003 (EECA…GNFN), 1004-1033 (ICGP…SVDG), 1035-1064 (KTDT…KVNH), 1068-1097 (NGMT…DFRR), 1101-1131 (RGAT…DINI), 1137-1166 (DKET…DVTI), and 1170-1199 (YDKT…KFRR). A 4C4.1 epitope region spans residues 1026–1032 (EEVLSVD). Residues 1196-1199 (KFRR) are furin-like endopeptidase recognition region. Positions 1200-1418 (EYKSSYGEHS…SEKKIQKISI (219 aa)) are excised as a propeptide.

The protein belongs to the cationic peptide 01 (latrotoxin) family. 03 (alpha-latrotoxin) subfamily. As to quaternary structure, homotetramer in membranes. Processed by furin-like proteases at both the N- and C-termini. Expressed in venom gland, cephalothorax, and abdomen tissues from both males and females.

The protein localises to the secreted. It localises to the target cell membrane. Its function is as follows. Presynaptic neurotoxin that causes massive release of neurotransmitters from vertebrate (but not invertebrate) nerve terminals and endocrine cells via a complex mechanism involving activation of receptor(s) and toxin insertion into the plasma membrane with subsequent pore formation. Binds to neurexin-1-alpha (NRXN1) in a calcium dependent manner, adhesion G protein-coupled receptor L1 (ADGRL1, also termed latrophilin-1 and calcium-independent receptor of latrotoxin (CIRL)), and receptor-type tyrosine-protein phosphatase S (PTPRS), also termed PTP sigma. NRXN1 and PTPRS are suggested to provide a platform for binding and subsequent pore formation events. In contrast, binding to ADGRL1 does not involve oligomerization and channel formation, but direct downstream stimulation of the synaptic fusion machinery. The polypeptide is Alpha-latrotoxin-Lhe1a (Latrodectus hesperus (Western black widow spider)).